A 793-amino-acid polypeptide reads, in one-letter code: Flavin carrier protein 1 (793 aa).

The signal sequence occupies residues 1-21 (MQVLVTLWCLICTCLVLPVAA). The Lumenal segment spans residues 22-163 (KKRTLTASSL…FFSNGKTVSQ (142 aa)). Residue N143 is glycosylated (N-linked (GlcNAc...) asparagine). A helical transmembrane segment spans residues 164 to 184 (IGVKWVTAVIAGIGLLTSAVL). Over 185–194 (STFGNSTAAS) the chain is Cytoplasmic. A helical transmembrane segment spans residues 195 to 215 (HISANTMSLFLYFQSVAVVAM). Over 216–223 (QHVDSVPP) the chain is Lumenal. A helical membrane pass occupies residues 224 to 244 (IAAAWSENLAWSMGLIRITFM). Residues 245–249 (QKIFR) are Cytoplasmic-facing. A helical membrane pass occupies residues 250-272 (WYVEATGGSASLYLTATTMSVLT). Over 273–317 (QRGLDYLKNTSVYKRAENVLYGNSNTLIFRGIKRMGYRMKIENTA) the chain is Lumenal. N-linked (GlcNAc...) asparagine glycosylation is present at N281. Residues 318–338 (IVCTGFTFFVLCGYFLAGFIM) traverse the membrane as a helical segment. Residues 339–372 (ACKYSIELCIRCGWMRSDRFYQFRKNWRSVLKGS) are Cytoplasmic-facing. Residues 373–393 (LLRYIYIGFTQLTILSFWEFT) form a helical membrane-spanning segment. Topologically, residues 394 to 397 (ERDS) are lumenal. A helical membrane pass occupies residues 398–418 (AGVIVIACLFIVLSCGLMAWA). The Cytoplasmic portion of the chain corresponds to 419 to 461 (AYRTIFFASKSVEMYNNPAALLYGDEYVLNKYGFFYTMFNAKH). A helical transmembrane segment spans residues 462 to 482 (YWWNALLTTYILVKALFVGFA). Residues 483–484 (QA) are Lumenal-facing. Residues 485 to 505 (SGKTQALAIFIIDLAYFVAII) form a helical membrane-spanning segment. The Cytoplasmic segment spans residues 506–516 (RYKPYLDRPTN). The helical transmembrane segment at 517 to 537 (IVNIFICTVTLVNSFLFMFFS) threads the bilayer. Topologically, residues 538-551 (NLFNQKYAVSAIMG) are lumenal. Residues 552-572 (WVFFIMNAAFSLLLLLMILAF) form a helical membrane-spanning segment. The Cytoplasmic segment spans residues 573–793 (TTIILFSKNP…KANILDPDYL (221 aa)). A Phosphoserine modification is found at S610. T626 carries the phosphothreonine modification. Disordered regions lie at residues 649-674 (YDDE…PTFS) and 689-731 (KLGS…QESE). Over residues 701-719 (ITQQEVSPDRASSSPNSKS) the composition is skewed to polar residues. S771 and S774 each carry phosphoserine.

It belongs to the transient receptor potential (TRP) ion channel family.

It localises to the endoplasmic reticulum membrane. May be responsible for the transport of FAD into the endoplasmic reticulum lumen, where it is required for oxidative protein folding. This is Flavin carrier protein 1 (FLC1) from Saccharomyces cerevisiae (strain ATCC 204508 / S288c) (Baker's yeast).